Reading from the N-terminus, the 104-residue chain is U20-lycotoxin-Ls1c (104 aa).

An N-terminal signal peptide occupies residues 1–30 (MFSTSDQVSKMNSRILSALLILGIATCVIA). The WAP domain maps to 31-76 (GGFCPKSRHPQCDLSYKINDCCAQSDCRVGSVCCVEGCGNVCRAES). Disulfide bonds link Cys34–Cys64, Cys42–Cys68, Cys51–Cys63, Cys52–Cys90, and Cys57–Cys72.

This sequence belongs to the venom protein 11 family. 02 (wap-2) subfamily. Post-translationally, contains 5 disulfide bonds. In terms of tissue distribution, expressed by the venom gland.

The protein localises to the secreted. In terms of biological role, has antibacterial activity. The protein is U20-lycotoxin-Ls1c of Lycosa singoriensis (Wolf spider).